The primary structure comprises 271 residues: MKI67 FHA domain-interacting nucleolar phosphoprotein (271 aa).

Residues 1 to 20 (MAEYSGPAKPTLALNPREDS) form a disordered region. At Ala2 the chain carries N-acetylalanine. Lys37 is covalently cross-linked (Glycyl lysine isopeptide (Lys-Gly) (interchain with G-Cter in SUMO2)). Positions 44 to 122 (GVVYLGHLPS…RLLSCKFMPR (79 aa)) constitute an RRM domain. Arg113 carries the omega-N-methylarginine modification. Residues Lys178 and Lys191 each participate in a glycyl lysine isopeptide (Lys-Gly) (interchain with G-Cter in SUMO2) cross-link. 2 positions are modified to phosphothreonine: Thr213 and Thr217. Residues Arg223 and Arg224 each carry the omega-N-methylated arginine modification. A Phosphoserine modification is found at Ser226. The disordered stretch occupies residues 242 to 271 (PVSPVKEDTQKTPAPESSGKKRLRKRKSKQ). A Glycyl lysine isopeptide (Lys-Gly) (interchain with G-Cter in SUMO1); alternate cross-link involves residue Lys247. Residue Lys247 forms a Glycyl lysine isopeptide (Lys-Gly) (interchain with G-Cter in SUMO2); alternate linkage. Residues 261–271 (KKRLRKRKSKQ) are compositionally biased toward basic residues.

As to quaternary structure, binds to the FHA domain of MKI67; this interaction is enhanced in mitosis. Phosphorylated.

It localises to the nucleus. The protein localises to the nucleolus. It is found in the chromosome. This Rattus norvegicus (Rat) protein is MKI67 FHA domain-interacting nucleolar phosphoprotein (Nifk).